The sequence spans 487 residues: 3-octaprenyl-4-hydroxybenzoate carboxy-lyase (487 aa).

Position 172 (asparagine 172) interacts with Mn(2+). Prenylated FMN contacts are provided by residues 175-177, 189-191, and 194-195; these read IYR, RWL, and RG. Residue glutamate 238 coordinates Mn(2+). The Proton donor role is filled by aspartate 287.

It belongs to the UbiD family. In terms of assembly, homohexamer. Requires prenylated FMN as cofactor. Mn(2+) is required as a cofactor.

Its subcellular location is the cell membrane. The enzyme catalyses a 4-hydroxy-3-(all-trans-polyprenyl)benzoate + H(+) = a 2-(all-trans-polyprenyl)phenol + CO2. It functions in the pathway cofactor biosynthesis; ubiquinone biosynthesis. Catalyzes the decarboxylation of 3-octaprenyl-4-hydroxy benzoate to 2-octaprenylphenol, an intermediate step in ubiquinone biosynthesis. The polypeptide is 3-octaprenyl-4-hydroxybenzoate carboxy-lyase (Actinobacillus pleuropneumoniae serotype 5b (strain L20)).